Consider the following 300-residue polypeptide: 2-oxoglutarate-dependent dioxygenase DAO (300 aa).

In terms of domain architecture, Fe2OG dioxygenase spans 149–252; that stretch reads WPCQFRMNRY…VSIAMFLLAP (104 aa). 3 residues coordinate Fe cation: H173, D175, and H232. Residue R242 coordinates 2-oxoglutarate.

This sequence belongs to the iron/ascorbate-dependent oxidoreductase family. Fe(2+) serves as cofactor.

In terms of biological role, 2-oxoglutarate-dependent dioxygenase essential for auxin catabolism and maintenance of auxin homeostasis in reproductive organs. Catalyzes the irreversible oxidation of indole-3-acetic acid (IAA) to the biologically inactive 2-oxoindole-3-acetic acid (OxIAA). The chain is 2-oxoglutarate-dependent dioxygenase DAO (DAO) from Oryza sativa subsp. indica (Rice).